Consider the following 465-residue polypeptide: Hydroxyacid-oxoacid transhydrogenase, mitochondrial (465 aa).

It belongs to the iron-containing alcohol dehydrogenase family. Hydroxyacid-oxoacid transhydrogenase subfamily.

It localises to the mitochondrion. It carries out the reaction (S)-3-hydroxybutanoate + 2-oxoglutarate = (R)-2-hydroxyglutarate + acetoacetate. It catalyses the reaction 4-hydroxybutanoate + 2-oxoglutarate = (R)-2-hydroxyglutarate + succinate semialdehyde. Its function is as follows. Catalyzes the cofactor-independent reversible oxidation of gamma-hydroxybutyrate (GHB) to succinic semialdehyde (SSA) coupled to reduction of 2-ketoglutarate (2-KG) to D-2-hydroxyglutarate (D-2-HG). L-3-hydroxybutyrate (L-3-OHB) is also a substrate for HOT when using 2-KG as hydrogen acceptor, resulting in the formation of D-2-HG. This Caenorhabditis briggsae protein is Hydroxyacid-oxoacid transhydrogenase, mitochondrial.